Reading from the N-terminus, the 762-residue chain is 1-phosphatidylinositol 4,5-bisphosphate phosphodiesterase delta-4 (762 aa).

The 109-residue stretch at 16–124 folds into the PH domain; sequence LLMQEGMPMR…WMRGLQLLVD (109 aa). Residues 26–53 are substrate binding; the sequence is KVRSKSWKKLRYFRLQNDGMTVWHARQA. 3 consecutive EF-hand domains span residues 134 to 169, 170 to 205, and 206 to 237; these read RLDQ…MNVE, MDQE…LTKR, and AEVQ…EQKE. Residues Asp147, Asn149, Asp151, Lys153, Glu158, Asp183, Ser185, Ser187, Thr189, and Glu194 each contribute to the Ca(2+) site. The short motif at 213 to 243 is the GBA element; sequence ESFSADGQKLTLLEFLDFLREEQKERDCTSE. The PI-PLC X-box domain maps to 290–435; it reads QDMTQPLNHY…LRRRILVKGK (146 aa). His305 is a catalytic residue. 3 residues coordinate Ca(2+): Asn306, Glu335, and Asp337. His350 is an active-site residue. Residue Glu384 participates in Ca(2+) binding. Lys433 and Lys435 together coordinate substrate. A compositionally biased stretch (acidic residues) spans 443 to 471; that stretch reads LEYEEEEAEPELEESELALESQFETEPEP. The tract at residues 443-483 is disordered; the sequence is LEYEEEEAEPELEESELALESQFETEPEPQEQNLQSKDKKK. Residue Ser457 is modified to Phosphoserine. Residues 493 to 609 form the PI-PLC Y-box domain; the sequence is LSSLVIYLKS…GYVLKPDFLR (117 aa). Substrate is bound by residues Ser522 and Arg549. The 128-residue stretch at 609-736 folds into the C2 domain; that stretch reads RDIQSSFHPE…QGYRHIHLLS (128 aa). Residues Ile650, Asp652, Asn676, Asp705, Tyr706, and Asp707 each coordinate Ca(2+). The PDZ-binding motif lies at 731–734; the sequence is HIHL.

Interacts with GRIP1. Interacts (via GBA motif) with guanine nucleotide-binding protein G(i) alpha subunit GNAI3 (inactive GDP-bound form); low-affinity interaction. Requires Ca(2+) as cofactor.

The protein localises to the membrane. The protein resides in the nucleus. It localises to the cytoplasm. Its subcellular location is the endoplasmic reticulum. The catalysed reaction is a 1,2-diacyl-sn-glycero-3-phospho-(1D-myo-inositol-4,5-bisphosphate) + H2O = 1D-myo-inositol 1,4,5-trisphosphate + a 1,2-diacyl-sn-glycerol + H(+). The enzyme catalyses a 1,2-diacyl-sn-glycero-3-phospho-(1D-myo-inositol) + H2O = 1D-myo-inositol 1-phosphate + a 1,2-diacyl-sn-glycerol + H(+). In terms of biological role, hydrolyzes the phosphatidylinositol 4,5-bisphosphate (PIP2) to generate 2 second messenger molecules diacylglycerol (DAG) and inositol 1,4,5-trisphosphate (IP3). DAG mediates the activation of protein kinase C (PKC), while IP3 releases Ca(2+) from intracellular stores. Required for acrosome reaction in sperm during fertilization, probably by acting as an important enzyme for intracellular Ca(2+) mobilization in the zona pellucida-induced acrosome reaction. May play a role in cell growth. Modulates the liver regeneration in cooperation with nuclear PKC. Overexpression up-regulates the Erk signaling pathway and proliferation. The sequence is that of 1-phosphatidylinositol 4,5-bisphosphate phosphodiesterase delta-4 (PLCD4) from Pongo abelii (Sumatran orangutan).